The sequence spans 430 residues: MEKIIVRGGKQLNGSVKMEGAKNAVLPVIAATLLASKGTSVLKNVPNLSDVFTINEVLKYLNADVSFVNDEVTVNATGEITSDAPFEYVRKMRASIVVMGPLLARTGSARVALPGGCAIGSRPVDLHLKGFEAMGAIVKIENGYIEATAEKLVGAKVYLDFPSVGATQNIMMAATLAEGTTVIENVAREPEIVDLANFLNQMGARVIGAGTEVIRIEGVKELTATEHSIIPDRIEAGTFMIAAAITGGNVLIEDAVPEHISSLIAKLEEMGVQIIEEENGIRVIGPDKLKAVDVKTMPHPGFPTDMQSQMMVIQMLSEGTSIMTETVFENRFMHVEEMRRMNADMKIEGHSVIISGPAKLQGAEVAATDLRAAAALILAGLVADGYTQVTELKYLDRGYNNFHGKLQALGADVERVDDSKIDVTNLASLF.

22 to 23 (KN) provides a ligand contact to phosphoenolpyruvate. A UDP-N-acetyl-alpha-D-glucosamine-binding site is contributed by R93. C117 (proton donor) is an active-site residue. C117 carries the 2-(S-cysteinyl)pyruvic acid O-phosphothioketal modification. Residues 122–126 (RPVDL), D305, and V327 contribute to the UDP-N-acetyl-alpha-D-glucosamine site.

Belongs to the EPSP synthase family. MurA subfamily.

Its subcellular location is the cytoplasm. The enzyme catalyses phosphoenolpyruvate + UDP-N-acetyl-alpha-D-glucosamine = UDP-N-acetyl-3-O-(1-carboxyvinyl)-alpha-D-glucosamine + phosphate. The protein operates within cell wall biogenesis; peptidoglycan biosynthesis. Its function is as follows. Cell wall formation. Adds enolpyruvyl to UDP-N-acetylglucosamine. In Listeria monocytogenes serotype 4b (strain F2365), this protein is UDP-N-acetylglucosamine 1-carboxyvinyltransferase 1.